Consider the following 297-residue polypeptide: MGIEDISAMKNGFIVVPFKLPDHKALPKSQEASLHFMFAKRHQSSNSNESDCLFLVNLPLLSNIEHMKKFVGQLCGKYDTVSHVEELLYNDEFGLHEVDLSALTSDLMSSTDVNEKRYTPRNTALLKFVDAASINNCWNALKKYSNLHAKHPNELFEWTYTTPSFTTFVNFYKPLDIDYLKEDIHTHMAIFEQREAQAQEDVQSSIVDEDGFTLVVGKNTKSLNSIRKKILNKNPLSKHENKAKPISNIDKKAKKDFYRFQVRERKKQEINQLLSKFKEDQERIKVMKAKRKFNPYT.

This sequence belongs to the RRP7 family. As to quaternary structure, component of the 90S pre-ribosomal particle.

It localises to the nucleus. Its subcellular location is the nucleolus. Its function is as follows. Plays an important role in the synthesis of 18S rRNA but is not required for the 5.8S and 25S pathway. Is necessary for the cleavage at site A2. Is required for efficient association of RPS27 with the pre-ribosomal particle. The protein is Ribosomal RNA-processing protein 7 (RRP7) of Saccharomyces cerevisiae (strain ATCC 204508 / S288c) (Baker's yeast).